The primary structure comprises 648 residues: Activatory protein CHA4 (648 aa).

Pro residues predominate over residues 1-10 (MMLEPSPPPL). The segment at 1–37 (MMLEPSPPPLTTTVTPSLPSSLKKSVTDNDQNNNNVP) is disordered. The segment covering 11 to 22 (TTTVTPSLPSSL) has biased composition (low complexity). A DNA-binding region (zn(2)-C6 fungal-type) is located at residues 44–70 (CQNCRRRRRKCNMEKPCSNCIKFRTEC). Positions 140–177 (AQSALPSSESNDENESDAFTKKMPSESPPPVGTNSIYP) are disordered. Phosphoserine is present on residues serine 164 and serine 166.

It localises to the nucleus. In terms of biological role, activates the CHA1 gene for L-serine dehydratase. Binds to the DNA sequence 5'-GVGGARAYRTRATTCCRC-3'. This Saccharomyces cerevisiae (strain ATCC 204508 / S288c) (Baker's yeast) protein is Activatory protein CHA4 (CHA4).